Here is a 309-residue protein sequence, read N- to C-terminus: Protoheme IX farnesyltransferase 2 (309 aa).

8 helical membrane passes run 35–55 (FKVV…APDV), 59–79 (MGVQ…AAVI), 107–127 (AHAL…LMLW), 131–151 (LTAI…TSFL), 159–179 (IVIG…SETG), 186–206 (WLLV…LAIA), 238–258 (LLAI…IYLI), and 289–309 (FSII…WLLL).

It belongs to the UbiA prenyltransferase family. Protoheme IX farnesyltransferase subfamily.

It localises to the cell inner membrane. The catalysed reaction is heme b + (2E,6E)-farnesyl diphosphate + H2O = Fe(II)-heme o + diphosphate. It functions in the pathway porphyrin-containing compound metabolism; heme O biosynthesis; heme O from protoheme: step 1/1. Its function is as follows. Converts heme B (protoheme IX) to heme O by substitution of the vinyl group on carbon 2 of heme B porphyrin ring with a hydroxyethyl farnesyl side group. This is Protoheme IX farnesyltransferase 2 from Pseudoalteromonas translucida (strain TAC 125).